Here is a 461-residue protein sequence, read N- to C-terminus: tRNA modification GTPase MnmE (461 aa).

The (6S)-5-formyl-5,6,7,8-tetrahydrofolate site is built by Arg22, Glu87, and Arg126. The TrmE-type G domain maps to 223 to 382 (GLSTVILGRP…LEEAIAALFF (160 aa)). Asn233 is a K(+) binding site. Residues 233–238 (NVGKSS), 252–258 (TDIAGTT), and 277–280 (DTAG) contribute to the GTP site. Ser237 contacts Mg(2+). Thr252, Ile254, and Thr257 together coordinate K(+). Thr258 is a binding site for Mg(2+). Lys461 contributes to the (6S)-5-formyl-5,6,7,8-tetrahydrofolate binding site.

This sequence belongs to the TRAFAC class TrmE-Era-EngA-EngB-Septin-like GTPase superfamily. TrmE GTPase family. Homodimer. Heterotetramer of two MnmE and two MnmG subunits. K(+) is required as a cofactor.

It is found in the cytoplasm. Its function is as follows. Exhibits a very high intrinsic GTPase hydrolysis rate. Involved in the addition of a carboxymethylaminomethyl (cmnm) group at the wobble position (U34) of certain tRNAs, forming tRNA-cmnm(5)s(2)U34. The chain is tRNA modification GTPase MnmE from Lysinibacillus sphaericus (strain C3-41).